Consider the following 647-residue polypeptide: LIM domain kinase 1 (647 aa).

LIM zinc-binding domains follow at residues 25 to 75 (CASC…CKKD) and 84 to 137 (CHGC…CGHC). The PDZ domain occupies 165 to 258 (LVSIPASSHG…LLQLTLEHDP (94 aa)). Position 210 is a phosphoserine (Ser210). Thr229 is modified (phosphothreonine). Positions 260 to 319 (DTLGHGLGPETSPLSSPAYTPSGEAGSSARQKPVLRSCSIDRSPGAGSLGSPASQRKDLG) are disordered. Ser298, Ser302, Ser307, and Ser310 each carry phosphoserine. Low complexity predominate over residues 302 to 313 (SPGAGSLGSPAS). Ser323 is modified (phosphoserine; by MAPKAPK2). Position 337 is a phosphoserine (Ser337). Residues 339–604 (LIHGEVLGKG…PSFVKLEHWL (266 aa)) form the Protein kinase domain. ATP is bound by residues 345–353 (LGKGCFGQA) and Lys368. The active site involves Asp460. Position 508 is a phosphothreonine; by ROCK1 and PAK1 (Thr508).

This sequence belongs to the protein kinase superfamily. TKL Ser/Thr protein kinase family. As to quaternary structure, interacts (via LIM domain) with the cytoplasmic domain of NRG1. Interacts with NISCH. Interacts with RLIM and RNF6. Self-associates to form homodimers. Interacts with HSP90AA1; this interaction promotes LIMK1 dimerization and subsequent transphosphorylation. Interacts with CDKN1C. Interacts with SSH1. Interacts with ROCK1. Interacts (via LIM zinc-binding domains) with FAM89B/LRAP25 (via LRR repeat). Forms a tripartite complex with CDC42BPA, CDC42BPB and FAM89B/LRAP25. Post-translationally, autophosphorylated. Phosphorylated on Thr-508 by ROCK1 and PAK1, resulting in activation. Phosphorylated by PAK4 which increases the ability of LIMK1 to phosphorylate cofilin. Phosphorylated at Ser-323 by MAPKAPK2 during activation of VEGFA-induced signaling, which results in activation of LIMK1 and promotion of actin reorganization, cell migration, and tubule formation of endothelial cells. Dephosphorylated and inactivated by SSH1. Phosphorylated by CDC42BP. In terms of processing, ubiquitinated. 'Lys-48'-linked polyubiquitination by RNF6 leads to proteasomal degradation through the 26S proteasome, modulating LIMK1 levels in the growth cone and its effect on axonal outgrowth. Also polyubiquitinated by RLIM. In terms of tissue distribution, highest expression in both adult and fetal nervous system. Detected ubiquitously throughout the different regions of adult brain, with highest levels in the cerebral cortex. Expressed to a lesser extent in heart and skeletal muscle.

The protein localises to the cytoplasm. It localises to the nucleus. Its subcellular location is the cytoskeleton. It is found in the cell projection. The protein resides in the lamellipodium. It carries out the reaction L-seryl-[protein] + ATP = O-phospho-L-seryl-[protein] + ADP + H(+). The enzyme catalyses L-threonyl-[protein] + ATP = O-phospho-L-threonyl-[protein] + ADP + H(+). Serine/threonine-protein kinase that plays an essential role in the regulation of actin filament dynamics. Acts downstream of several Rho family GTPase signal transduction pathways. Activated by upstream kinases including ROCK1, PAK1 and PAK4, which phosphorylate LIMK1 on a threonine residue located in its activation loop. LIMK1 subsequently phosphorylates and inactivates the actin binding/depolymerizing factors cofilin-1/CFL1, cofilin-2/CFL2 and destrin/DSTN, thereby preventing the cleavage of filamentous actin (F-actin), and stabilizing the actin cytoskeleton. In this way LIMK1 regulates several actin-dependent biological processes including cell motility, cell cycle progression, and differentiation. Phosphorylates TPPP on serine residues, thereby promoting microtubule disassembly. Stimulates axonal outgrowth and may be involved in brain development. In terms of biological role, has a dominant negative effect on actin cytoskeletal changes. Required for atypical chemokine receptor ACKR2-induced phosphorylation of cofilin (CFL1). The protein is LIM domain kinase 1 (LIMK1) of Homo sapiens (Human).